The sequence spans 325 residues: Beta-ketoacyl-[acyl-carrier-protein] synthase III (325 aa).

Residues Cys-112 and His-250 contribute to the active site. The ACP-binding stretch occupies residues 251 to 255 (QANSR). Asn-280 is a catalytic residue.

It belongs to the thiolase-like superfamily. FabH family. Homodimer.

Its subcellular location is the cytoplasm. The enzyme catalyses malonyl-[ACP] + acetyl-CoA + H(+) = 3-oxobutanoyl-[ACP] + CO2 + CoA. The protein operates within lipid metabolism; fatty acid biosynthesis. In terms of biological role, catalyzes the condensation reaction of fatty acid synthesis by the addition to an acyl acceptor of two carbons from malonyl-ACP. Catalyzes the first condensation reaction which initiates fatty acid synthesis and may therefore play a role in governing the total rate of fatty acid production. Possesses both acetoacetyl-ACP synthase and acetyl transacylase activities. Its substrate specificity determines the biosynthesis of branched-chain and/or straight-chain of fatty acids. The protein is Beta-ketoacyl-[acyl-carrier-protein] synthase III of Lactococcus lactis subsp. cremoris (strain MG1363).